Reading from the N-terminus, the 443-residue chain is Ribitol-5-phosphate xylosyltransferase 1 (443 aa).

At 1–9 (MRLTRKRLC) the chain is on the cytoplasmic side. The helical; Signal-anchor for type II membrane protein transmembrane segment at 10–30 (SFLIALYCLFSLYAAYHVFFG) threads the bilayer. Over 31–443 (RRRQAPAGSP…ESSFLMNNKS (413 aa)) the chain is Extracellular. Residues 35 to 76 (APAGSPRGLRKGAAPARERRGREQSTLESEEWNPWEGDEKNE) are disordered. Positions 50–59 (ARERRGREQS) are enriched in basic and acidic residues.

This sequence belongs to the RXYLT1 family. Forms a complex composed of FKTN/fukutin, FKRP and RXYLT1/TMEM5.

The protein localises to the golgi apparatus membrane. The catalysed reaction is 3-O-[Rib-ol-P-Rib-ol-P-3-beta-D-GalNAc-(1-&gt;3)-beta-D-GlcNAc-(1-&gt;4)-(O-6-P-alpha-D-Man)]-Thr-[protein] + UDP-alpha-D-xylose = 3-O-[beta-D-Xyl-(1-&gt;4)-Rib-ol-P-Rib-ol-P-3-beta-D-GalNAc-(1-&gt;3)-beta-D-GlcNAc-(1-&gt;4)-(O-6-P-alpha-D-Man)]-Thr-[protein] + UDP + H(+). It participates in protein modification; protein glycosylation. Acts as a UDP-D-xylose:ribitol-5-phosphate beta1,4-xylosyltransferase, which catalyzes the transfer of UDP-D-xylose to ribitol 5-phosphate (Rbo5P) to form the Xylbeta1-4Rbo5P linkage on O-mannosyl glycan. Participates in the biosynthesis of the phosphorylated O-mannosyl trisaccharide (N-acetylgalactosamine-beta-3-N-acetylglucosamine-beta-4-(phosphate-6-)mannose), a carbohydrate structure present in alpha-dystroglycan (DAG1), which is required for binding laminin G-like domain-containing extracellular proteins with high affinity. In Homo sapiens (Human), this protein is Ribitol-5-phosphate xylosyltransferase 1.